A 165-amino-acid chain; its full sequence is MENSHNESEEQPQSTPKVEEEQPAVEQSPENQCSEDDQSSEDLSSEEQSSDEEFFPEELLPELLPEMLLCEDRPPQECLPQKNAFEDRIPMEQPPCGIGKHKLEEGSFKERLARSRPQFRGDIHGRNLSNEEMIRAADELEEMKRVRNKLMIMHWKAKRSRPYPI.

Disordered regions lie at residues 1–66 (MENS…LLPE) and 89–124 (IPMEQPPCGIGKHKLEEGSFKERLARSRPQFRGDIH). The segment covering 33–60 (CSEDDQSSEDLSSEEQSSDEEFFPEELL) has biased composition (acidic residues). A compositionally biased stretch (basic and acidic residues) spans 101–124 (HKLEEGSFKERLARSRPQFRGDIH).

Belongs to the TFS-II family. TFA subfamily.

It localises to the nucleus. Its function is as follows. May be involved in transcriptional regulation. Modulates various viral and cellular promoters in a promoter context-dependent manner. Does not bind DNA directly. The protein is Transcription elongation factor A protein-like 1 of Rattus norvegicus (Rat).